A 35-amino-acid polypeptide reads, in one-letter code: Cupiennin-1a (35 aa).

Glutamate 35 carries the post-translational modification Glutamic acid 1-amide.

The protein belongs to the cationic peptide 04 (cupiennin) family. 01 subfamily. Monomer. Interacts with CSTX-1 (AC P81694), CSTX-9 (AC P58604), and CSTX-13 (AC P83919). As to expression, expressed by the venom gland.

It is found in the secreted. Functionally, has antimicrobial activity against B.subtilis, E.coli, E.faecalis, P.denitrificans, P.aeruginosa, P.putida, S.aureus, and S.epidermidis. Shows insecticidal and hemolytic activities. Probably acts by disturbing membrane function with its amphipathic structure. Synergistically increases the insecticidal activity of CSTX-1 (AC P81694), CSTX-9 (AC P58604), and CSTX-13 (AC P83919) by up to 65%. Also inhibits the formation of nitric oxide by neuronal nitric oxide synthase. The polypeptide is Cupiennin-1a (Cupiennius salei (American wandering spider)).